A 212-amino-acid polypeptide reads, in one-letter code: Ribonuclease HII (212 aa).

The RNase H type-2 domain occupies 19–212 (CIIVGVDEVG…SKISYMFKNS (194 aa)). D25, E26, and D120 together coordinate a divalent metal cation.

Belongs to the RNase HII family. Mn(2+) serves as cofactor. It depends on Mg(2+) as a cofactor.

The protein resides in the cytoplasm. It carries out the reaction Endonucleolytic cleavage to 5'-phosphomonoester.. Functionally, endonuclease that specifically degrades the RNA of RNA-DNA hybrids. This is Ribonuclease HII from Ehrlichia ruminantium (strain Welgevonden).